The sequence spans 1235 residues: Gem-associated protein 5 (1235 aa).

One copy of the WD 1 repeat lies at 55-102 (STRINILALDVSPMWGLGNGGPTKPFAIVGDDLSVQVWDCALGEAVIG). Residues 227 to 263 (NNLALSAEEWRSRNGGQEEKPKTKPPPLTKSKAAESD) are disordered. Basic and acidic residues predominate over residues 234–248 (EEWRSRNGGQEEKPK). 4 positions are modified to phosphoserine: Ser289, Ser290, Ser351, and Ser354. The interval 340-368 (DCEPTKPTGPLSDASTISNKNDASDSTEG) is disordered. Residues 352–368 (DASTISNKNDASDSTEG) show a composition bias toward polar residues. A Phosphothreonine modification is found at Thr355. Ser357 is subject to Phosphoserine. At Thr411 the chain carries Phosphothreonine. 7 WD repeats span residues 428 to 469 (ISAE…HAGK), 475 to 512 (KTAG…KMLR), 565 to 605 (TVAF…TSCL), 611 to 650 (YVSS…VKTH), 690 to 730 (TIVN…EKSW), 739 to 779 (LFAR…RNWK), and 788 to 828 (TEKA…KPPL). The short motif at 443-447 (LETLL) is the LXXLL motif element. A compositionally biased stretch (basic and acidic residues) spans 963 to 980 (KEQNNRSAKECPKCKEQS). Residues 963 to 983 (KEQNNRSAKECPKCKEQSPDS) are disordered.

As to quaternary structure, component of the core survival motor neuron (SMN) complex composed of Smn, Gem2, Gem3, rig/Gem5 and one of 3 almost identical Gem4 paralogs encoded by Glos/Gem4a, Gem4b or Gem4c. Interacts with nuclear receptors EcR, svp (seven up), usp (ultraspiracle), Hr39 and Hr3. Expressed in the brain and salivary glands of early and late second instar larvae. Expressed in nurse cells and oocytes.

The protein resides in the nucleus. The protein localises to the cytoplasm. It is found in the U-body. Its subcellular location is the gem. Its function is as follows. Component of the survival motor neuron (SMN) complex that catalyzes the assembly of small nuclear ribonucleoproteins (snRNPs), the building blocks of the spliceosome, and thereby plays an important role in the splicing of cellular pre-mRNAs. Nuclear receptor cofactor for the ecdysone-regulated processes of molting and puparium formation. Acts downstream from ecdysone biosynthesis and release to control the expression of specific ecdysone-regulated genes such as Eip74EF (E74). Essential in muscle and neuronal tissues for motor function, including climbing ability and flight. The protein is Gem-associated protein 5 of Drosophila melanogaster (Fruit fly).